The sequence spans 412 residues: MEDTTFLEGANLAGITTLMNNLHINEQANLEELEKQVMGKQQSFPTDHFDEELNGLAKSLGINFNDPEFSLDAAHSVISKKPSGRGSDKVHGGIRRDSVCTDSICSDSVCSGSIRSGSIRSGSIRDGSIRDGSIRSGNIRDGSVRSSKTRRGPARNSSSRNDRGYSLSTHRKKYAESEASQKTAISKRDRKNHYAESEYSEKSIKPSTKQVDRLINHLRSNGDPNSFYKKEHDYERKTKLVKLEKINMLLTYLGNEQISTDDIKIPTIDSSMQEIDDVIEMLTLRNVGIRYSSIAEEILIGLARGLEIVFDGTREIPFLNYRPDYTGLHNTFMIKLFKMRYETSQVVGNLVQNMSPLSKICLELGPSLLLYPALIRTKHKASEDLYNLLQKGPEDPFTAYNEIHETLKKNNK.

Tandem repeats lie at residues 112-116, 117-121, 122-126, 127-131, 132-136, 137-141, and 142-146. The tract at residues 112 to 146 is 7 X 5 AA tandem repeats of G-[NS]-[IV]-R-[DS]; sequence GSIRSGSIRSGSIRDGSIRDGSIRSGNIRDGSVRS. A compositionally biased stretch (low complexity) spans 116-126; the sequence is SGSIRSGSIRD. The segment at 116 to 209 is disordered; that stretch reads SGSIRSGSIR…SEKSIKPSTK (94 aa). Residues 192–209 are compositionally biased toward basic and acidic residues; the sequence is NHYAESEYSEKSIKPSTK.

Belongs to the asfivirus B407L family.

This is an uncharacterized protein from Ornithodoros (relapsing fever ticks).